Consider the following 122-residue polypeptide: Ribosome-binding factor A (122 aa).

This sequence belongs to the RbfA family. As to quaternary structure, monomer. Binds 30S ribosomal subunits, but not 50S ribosomal subunits or 70S ribosomes.

Its subcellular location is the cytoplasm. Functionally, one of several proteins that assist in the late maturation steps of the functional core of the 30S ribosomal subunit. Associates with free 30S ribosomal subunits (but not with 30S subunits that are part of 70S ribosomes or polysomes). Required for efficient processing of 16S rRNA. May interact with the 5'-terminal helix region of 16S rRNA. The chain is Ribosome-binding factor A from Dichelobacter nodosus (strain VCS1703A).